The following is an 842-amino-acid chain: Follistatin-related protein 4 (842 aa).

A signal peptide spans 1-22 (MKPGGFWLHLTLLGASLPAALG). In terms of domain architecture, Kazal-like spans 81–135 (KTGEPECQCLEACRPSYVPVCGSDGRFYENHCKLHRAACLLGKRITVIHSKDCFL). Cystine bridges form between C87–C119, C93–C112, and C101–C133. The EF-hand domain maps to 174 to 209 (QKRLLVESLFRDLDADGNGHLSSSELAQHVLKKQDL). Residues D187, D189, N191, H193, and E198 each contribute to the Ca(2+) site. Ig-like domains follow at residues 251-338 (PEDR…LQVN) and 341-426 (PVIR…EDIS). Cystine bridges form between C270–C321 and C362–C413. N318 is a glycosylation site (N-linked (GlcNAc...) asparagine).

Its subcellular location is the secreted. The protein is Follistatin-related protein 4 (FSTL4) of Homo sapiens (Human).